We begin with the raw amino-acid sequence, 457 residues long: UPF0210 protein Sfum_2948 (457 aa).

The protein belongs to the UPF0210 family. As to quaternary structure, homodimer.

The sequence is that of UPF0210 protein Sfum_2948 from Syntrophobacter fumaroxidans (strain DSM 10017 / MPOB).